We begin with the raw amino-acid sequence, 398 residues long: Unsaturated chondroitin disaccharide hydrolase (398 aa).

Residue Asp115 is the Nucleophile of the active site. The substrate site is built by Asp115, Asp175, Gly233, Thr235, Arg247, Trp251, Ser365, and Ser368. Catalysis depends on Asp175, which acts as the Proton donor.

The protein belongs to the glycosyl hydrolase 88 family. In terms of assembly, monomer.

It catalyses the reaction beta-D-4-deoxy-Delta(4)-GlcpA-(1-&gt;3)-beta-D-GalpNAc6S + H2O = N-acetyl-beta-D-galactosamine 6-sulfate + 5-dehydro-4-deoxy-D-glucuronate. Its function is as follows. Catalyzes the hydrolysis of unsaturated hyaluronate and chondroitin disaccharides. Also degrades unsaturated heparin disaccharides. Releases 4-deoxy-4,5-didehydro D-glucuronic acid or 4-deoxy-4,5-didehydro L-iduronic acid from chondroitin disaccharides, hyaluronan disaccharides and heparin disaccharides and cleaves both glycosidic (1-&gt;3) and (1-&gt;4) bonds. Prefers sulfated glycosaminoglycans compared to unsulfated glycosaminoglycans. Probably required for mammalian cells invasion through the degradation of extracellular sulfated glycosaminoglycans such as chondroitin and hyaluronan. The sequence is that of Unsaturated chondroitin disaccharide hydrolase from Streptococcus agalactiae serotype III (strain NEM316).